The sequence spans 122 residues: Large ribosomal subunit protein uL18 (122 aa).

It belongs to the universal ribosomal protein uL18 family. Part of the 50S ribosomal subunit; part of the 5S rRNA/L5/L18/L25 subcomplex. Contacts the 5S and 23S rRNAs.

Functionally, this is one of the proteins that bind and probably mediate the attachment of the 5S RNA into the large ribosomal subunit, where it forms part of the central protuberance. The polypeptide is Large ribosomal subunit protein uL18 (Thermotoga petrophila (strain ATCC BAA-488 / DSM 13995 / JCM 10881 / RKU-1)).